A 239-amino-acid polypeptide reads, in one-letter code: tRNA (guanine-N(7)-)-methyltransferase (239 aa).

The S-adenosyl-L-methionine site is built by Glu69, Glu94, Asp121, and Asp144. The active site involves Asp144. Substrate is bound at residue Lys148. An interaction with RNA region spans residues 150 to 155; that stretch reads RHNKRR. Substrate-binding positions include Asp180 and 217–220; that span reads TKFE.

It belongs to the class I-like SAM-binding methyltransferase superfamily. TrmB family. As to quaternary structure, monomer.

The catalysed reaction is guanosine(46) in tRNA + S-adenosyl-L-methionine = N(7)-methylguanosine(46) in tRNA + S-adenosyl-L-homocysteine. Its pathway is tRNA modification; N(7)-methylguanine-tRNA biosynthesis. Functionally, catalyzes the formation of N(7)-methylguanine at position 46 (m7G46) in tRNA. The protein is tRNA (guanine-N(7)-)-methyltransferase of Pectobacterium atrosepticum (strain SCRI 1043 / ATCC BAA-672) (Erwinia carotovora subsp. atroseptica).